The chain runs to 291 residues: Glutamate racemase (291 aa).

Substrate contacts are provided by residues 12–13 (DS) and 44–45 (YG). Catalysis depends on C75, which acts as the Proton donor/acceptor. Residue 76 to 77 (NT) participates in substrate binding. C187 acts as the Proton donor/acceptor in catalysis. 188-189 (TH) contributes to the substrate binding site. Low complexity predominate over residues 234–247 (ATQAAGARAQMAPS). The segment at 234-257 (ATQAAGARAQMAPSAPEPKEGTPD) is disordered.

The protein belongs to the aspartate/glutamate racemases family.

The catalysed reaction is L-glutamate = D-glutamate. It participates in cell wall biogenesis; peptidoglycan biosynthesis. Provides the (R)-glutamate required for cell wall biosynthesis. The sequence is that of Glutamate racemase from Koribacter versatilis (strain Ellin345).